The following is a 346-amino-acid chain: Phosphoribosylformylglycinamidine cyclo-ligase (346 aa).

This sequence belongs to the AIR synthase family.

Its subcellular location is the cytoplasm. It catalyses the reaction 2-formamido-N(1)-(5-O-phospho-beta-D-ribosyl)acetamidine + ATP = 5-amino-1-(5-phospho-beta-D-ribosyl)imidazole + ADP + phosphate + H(+). Its pathway is purine metabolism; IMP biosynthesis via de novo pathway; 5-amino-1-(5-phospho-D-ribosyl)imidazole from N(2)-formyl-N(1)-(5-phospho-D-ribosyl)glycinamide: step 2/2. The polypeptide is Phosphoribosylformylglycinamidine cyclo-ligase (Geobacillus sp. (strain WCH70)).